The following is a 693-amino-acid chain: Elongation factor G (693 aa).

Residues 8 to 283 (NKVRNFGIAA…AVCDYLPSPL (276 aa)) enclose the tr-type G domain. Residues 17–24 (AHIDAGKT), 81–85 (DTPGH), and 135–138 (NKMD) each bind GTP.

It belongs to the TRAFAC class translation factor GTPase superfamily. Classic translation factor GTPase family. EF-G/EF-2 subfamily.

It localises to the cytoplasm. Functionally, catalyzes the GTP-dependent ribosomal translocation step during translation elongation. During this step, the ribosome changes from the pre-translocational (PRE) to the post-translocational (POST) state as the newly formed A-site-bound peptidyl-tRNA and P-site-bound deacylated tRNA move to the P and E sites, respectively. Catalyzes the coordinated movement of the two tRNA molecules, the mRNA and conformational changes in the ribosome. This is Elongation factor G from Endomicrobium trichonymphae.